The sequence spans 101 residues: Signal recognition particle 19 kDa protein (101 aa).

It belongs to the SRP19 family. Part of the signal recognition particle protein translocation system, which is composed of SRP and FtsY. Archaeal SRP consists of a 7S RNA molecule of 300 nucleotides and two protein subunits: SRP54 and SRP19.

The protein resides in the cytoplasm. Its function is as follows. Involved in targeting and insertion of nascent membrane proteins into the cytoplasmic membrane. Binds directly to 7S RNA and mediates binding of the 54 kDa subunit of the SRP. This is Signal recognition particle 19 kDa protein from Methanosarcina barkeri (strain Fusaro / DSM 804).